Reading from the N-terminus, the 157-residue chain is Transcriptional repressor NrdR (157 aa).

A disordered region spans residues 1-21 (MKCPNCHKNGSRVVDSRPADN). The segment at 3–34 (CPNCHKNGSRVVDSRPADNGHAIRRRRECEQC) is a zinc-finger region. The 91-residue stretch at 49 to 139 (LLVIKKNGTR…VYREFKDMHA (91 aa)) folds into the ATP-cone domain.

The protein belongs to the NrdR family. It depends on Zn(2+) as a cofactor.

Negatively regulates transcription of bacterial ribonucleotide reductase nrd genes and operons by binding to NrdR-boxes. This Ligilactobacillus salivarius (strain UCC118) (Lactobacillus salivarius) protein is Transcriptional repressor NrdR.